The following is a 469-amino-acid chain: Zinc finger and BTB domain-containing protein 8A.1-B (469 aa).

Residues C24 to G92 form the BTB domain. 2 consecutive C2H2-type zinc fingers follow at residues F315–H337 and Y343–H366.

It localises to the nucleus. Functionally, may be involved in transcriptional regulation. The polypeptide is Zinc finger and BTB domain-containing protein 8A.1-B (zbtb8a.1-b) (Xenopus laevis (African clawed frog)).